The sequence spans 320 residues: MITINSKEHILEQKYRPSSIDECILPAYDHETFKSLVSKGKLPHIILHSPSPGTGKTTVAKALCNDINAEMMFVNGSDCKIDFVRGPLTAFARSVSMEGKPKVIVIDEFDRSGLAESQRHLRTFMEEFSSNCSIIITANNIDGIIEPLRSRCRVIEFGRPTEEDKISMMKKMIHRMVEICKNENIEIADMKVVAALVKKNFPDFRRTIGQLDQYSSKGVLDAGILSIVTNDRGTVSDVIEAMKNKDIKQLRALAPKYAADYSWFIDKLVSECYDQVAPGKSIISLYEIAGENNKFHGLASNIELHVMYMLLQLTCELTWK.

Residues 12–15 (EQKY), Ile24, 53–58 (GTGKTT), and Arg205 contribute to the ATP site.

It belongs to the Tevenvirinae sliding-clamp-loader large subunit family. The sliding-clamp-loader consists of 4 large subunits and 1 small subunit. Interacts with the sliding clamp; this interaction allows the sliding-clamp-loader to open the sliding clamp. Part of the replicase complex that includes the DNA polymerase, the polymerase clamp, the clamp loader complex, the single-stranded DNA binding protein, the primase, the helicase and the helicase assembly factor.

Its function is as follows. Forms the sliding-clamp-loader together with the small subunit. Functions as an ATPase enzyme. The clamp loader holds the clamp in an open conformation and places it onto the DNA. 4 ATP molecules must bind to the sliding-clamp-loader before the latter can open the sliding clamp. ATP hydrolysis triggers the detachment of the sliding clamp from the sliding-clamp-loader, freeing the sliding clamp to track along DNA. This chain is Sliding-clamp-loader large subunit (44), found in Escherichia phage RB69 (Bacteriophage RB69).